The following is a 587-amino-acid chain: 2-succinyl-5-enolpyruvyl-6-hydroxy-3-cyclohexene-1-carboxylate synthase (587 aa).

The protein belongs to the TPP enzyme family. MenD subfamily. As to quaternary structure, homodimer. Mg(2+) serves as cofactor. It depends on Mn(2+) as a cofactor. Requires thiamine diphosphate as cofactor.

The enzyme catalyses isochorismate + 2-oxoglutarate + H(+) = 5-enolpyruvoyl-6-hydroxy-2-succinyl-cyclohex-3-ene-1-carboxylate + CO2. It functions in the pathway quinol/quinone metabolism; 1,4-dihydroxy-2-naphthoate biosynthesis; 1,4-dihydroxy-2-naphthoate from chorismate: step 2/7. The protein operates within cofactor biosynthesis; phylloquinone biosynthesis. Catalyzes the thiamine diphosphate-dependent decarboxylation of 2-oxoglutarate and the subsequent addition of the resulting succinic semialdehyde-thiamine pyrophosphate anion to isochorismate to yield 2-succinyl-5-enolpyruvyl-6-hydroxy-3-cyclohexene-1-carboxylate (SEPHCHC). This Prochlorococcus marinus (strain MIT 9312) protein is 2-succinyl-5-enolpyruvyl-6-hydroxy-3-cyclohexene-1-carboxylate synthase.